The following is a 1318-amino-acid chain: DNA-directed RNA polymerase subunit beta' (1318 aa).

Residues C60, C62, C75, and C78 each contribute to the Zn(2+) site. Positions 535, 537, and 539 each coordinate Mg(2+). Positions 890, 967, 974, and 977 each coordinate Zn(2+).

Belongs to the RNA polymerase beta' chain family. As to quaternary structure, the RNAP catalytic core consists of 2 alpha, 1 beta, 1 beta' and 1 omega subunit. When a sigma factor is associated with the core the holoenzyme is formed, which can initiate transcription. Mg(2+) is required as a cofactor. Zn(2+) serves as cofactor.

It catalyses the reaction RNA(n) + a ribonucleoside 5'-triphosphate = RNA(n+1) + diphosphate. In terms of biological role, DNA-dependent RNA polymerase catalyzes the transcription of DNA into RNA using the four ribonucleoside triphosphates as substrates. The sequence is that of DNA-directed RNA polymerase subunit beta' from Rhodococcus jostii (strain RHA1).